The primary structure comprises 84 residues: Kunitz-type serine protease inhibitor DrKIn-II (84 aa).

Positions 1–24 (MSSGGLLLLLGLLTLWAELTPISG) are cleaved as a signal peptide. The BPTI/Kunitz inhibitor domain occupies 31 to 81 (CNLAPESGRCRAHLRRIYYNLESNKCEVFFYGGCGGNDNNFSTWDECRHTC). 3 disulfide bridges follow: C31/C81, C40/C64, and C56/C77.

The protein belongs to the venom Kunitz-type family. Expressed by the venom gland.

The protein localises to the secreted. Its function is as follows. Serine protease inhibitor that inhibits plasmin (90%) (Ki=0.19 nM), trypsin (70%), FXIa/F11 (37%) (Ki=6 nM) and FXa/F10 (20%), and prolonges the activated partial thromboplastin time. This antifibrinolytic property has been confirmed by a fibrin plate assay. Shows less antifibrinolytic activity that aprotinin. In vivo, reduces the bleeding time in a murine bleeding model, and prevents the increase of fibrin(ogen) degradation products in coagulation-stimulated mice. The protein is Kunitz-type serine protease inhibitor DrKIn-II of Daboia russelii (Russel's viper).